Here is a 1179-residue protein sequence, read N- to C-terminus: Pesticidal crystal protein Cry1Ad (1179 aa).

Belongs to the delta endotoxin family.

Functionally, promotes colloidosmotic lysis by binding to the midgut epithelial cells of many lepidopteran larvae. The polypeptide is Pesticidal crystal protein Cry1Ad (cry1Ad) (Bacillus thuringiensis subsp. aizawai).